We begin with the raw amino-acid sequence, 467 residues long: uncharacterized protein (467 aa).

Lys-290 is subject to N6-(pyridoxal phosphate)lysine.

It belongs to the class-III pyridoxal-phosphate-dependent aminotransferase family. Requires pyridoxal 5'-phosphate as cofactor.

This is an uncharacterized protein from Sinorhizobium fredii (strain NBRC 101917 / NGR234).